The sequence spans 314 residues: L-lactate dehydrogenase 1 (314 aa).

Residues Val-16, Asp-37, Lys-42, Tyr-68, and 82 to 83 (GL) contribute to the NAD(+) site. Residues Gln-85, Arg-91, and 123–126 (NPVD) contribute to the substrate site. NAD(+) contacts are provided by residues 121-123 (ATN) and Ser-146. 151–154 (DSAR) is a binding site for substrate. Beta-D-fructose 1,6-bisphosphate contacts are provided by Arg-156 and His-171. The Proton acceptor role is filled by His-178. Phosphotyrosine is present on Tyr-223. Substrate is bound at residue Thr-232.

The protein belongs to the LDH/MDH superfamily. LDH family. As to quaternary structure, homotetramer.

The protein resides in the cytoplasm. It catalyses the reaction (S)-lactate + NAD(+) = pyruvate + NADH + H(+). It participates in fermentation; pyruvate fermentation to lactate; (S)-lactate from pyruvate: step 1/1. Its activity is regulated as follows. Allosterically activated by fructose 1,6-bisphosphate (FBP). Functionally, catalyzes the conversion of lactate to pyruvate. This chain is L-lactate dehydrogenase 1, found in Bacillus cereus (strain ATCC 14579 / DSM 31 / CCUG 7414 / JCM 2152 / NBRC 15305 / NCIMB 9373 / NCTC 2599 / NRRL B-3711).